The following is a 435-amino-acid chain: Serine carboxypeptidase-like 12 (435 aa).

The first 21 residues, 1-21, serve as a signal peptide directing secretion; it reads MKSTPKLLLLLLFIINHHVDS. Disulfide bonds link Cys-80–Cys-323, Cys-244–Cys-258, and Cys-282–Cys-289. Asn-101 carries an N-linked (GlcNAc...) asparagine glycan. Residue Ser-176 is part of the active site. N-linked (GlcNAc...) asparagine glycans are attached at residues Asn-313, Asn-336, and Asn-344. Asp-360 is a catalytic residue. An N-linked (GlcNAc...) asparagine glycan is attached at Asn-376. His-413 is an active-site residue. Residue Asn-420 is glycosylated (N-linked (GlcNAc...) asparagine).

Belongs to the peptidase S10 family. In terms of tissue distribution, expressed in roots.

The protein localises to the secreted. In terms of biological role, probable carboxypeptidase. In Arabidopsis thaliana (Mouse-ear cress), this protein is Serine carboxypeptidase-like 12 (SCPL12).